Consider the following 491-residue polypeptide: Glutathione synthetase GSH2 (491 aa).

Arg-128 contributes to the substrate binding site. Glu-146 contacts ATP. Residues Glu-146 and Asn-148 each coordinate Mg(2+). Substrate-binding positions include Val-150–Ser-153, Glu-228–Asn-230, Gln-234, and Arg-285–Tyr-288. ATP contacts are provided by residues Lys-324, Lys-382–Asn-391, Tyr-393, Met-415–Ile-418, and Glu-442. Glu-386 contacts Mg(2+). Arg-467 contributes to the substrate binding site. The ATP site is built by Lys-469 and Glu-475. A substrate-binding site is contributed by Val-478–Ala-479.

This sequence belongs to the eukaryotic GSH synthase family. As to quaternary structure, homodimer. It depends on Mg(2+) as a cofactor.

The enzyme catalyses gamma-L-glutamyl-L-cysteine + glycine + ATP = glutathione + ADP + phosphate + H(+). It functions in the pathway sulfur metabolism; glutathione biosynthesis; glutathione from L-cysteine and L-glutamate: step 2/2. In Saccharomyces cerevisiae (strain ATCC 204508 / S288c) (Baker's yeast), this protein is Glutathione synthetase GSH2 (GSH2).